Reading from the N-terminus, the 385-residue chain is Deoxyguanosinetriphosphate triphosphohydrolase-like protein (385 aa).

An HD domain is found at 75-204 (RLTHSLEVAQ…INFADEIAYN (130 aa)).

Belongs to the dGTPase family. Type 2 subfamily.

The chain is Deoxyguanosinetriphosphate triphosphohydrolase-like protein from Geobacter sulfurreducens (strain ATCC 51573 / DSM 12127 / PCA).